We begin with the raw amino-acid sequence, 146 residues long: 3-dehydroquinate dehydratase (146 aa).

The active-site Proton acceptor is the Tyr23. 3 residues coordinate substrate: Asn75, His81, and Asp88. The active-site Proton donor is the His101. Substrate is bound by residues 102 to 103 (LS) and Arg112.

The protein belongs to the type-II 3-dehydroquinase family. In terms of assembly, homododecamer.

The catalysed reaction is 3-dehydroquinate = 3-dehydroshikimate + H2O. Its pathway is metabolic intermediate biosynthesis; chorismate biosynthesis; chorismate from D-erythrose 4-phosphate and phosphoenolpyruvate: step 3/7. In terms of biological role, catalyzes a trans-dehydration via an enolate intermediate. The protein is 3-dehydroquinate dehydratase of Marinobacter nauticus (strain ATCC 700491 / DSM 11845 / VT8) (Marinobacter aquaeolei).